Here is a 685-residue protein sequence, read N- to C-terminus: MRLLIFLGLLWSLVATLLGSKWPEPVFGRLVSPGFPEKYADHQDRSWTLTAPPGYRLRLYFTHFDLELSYRCEYDFVKLSSGTKVLATLCGQESTDTEQAPGNDTFYSLGPSLKVTFHSDYSNEKPFTGFEAFYAAEDVDECRVSLGDSVPCDHYCHNYLGGYYCSCRAGYVLHQNKHTCSALCSGQVFTGRSGYLSSPEYPQPYPKLSSCTYSIRLEDGFSVILDFVESFDVETHPEAQCPYDSLKIQTDKGEHGPFCGKTLPPRIETDSHKVTITFATDESGNHTGWKIHYTSTARPCPDPTAPPNGSISPVQAIYVLKDRFSVFCKTGFELLQGSVPLKSFTAVCQKDGSWDRPMPECSIIDCGPPDDLPNGHVDYITGPEVTTYKAVIQYSCEETFYTMSSNGKYVCEADGFWTSSKGEKLPPVCEPVCGLSTHTIGGRIVGGQPAKPGDFPWQVLLLGQTTAAAGALIHDNWVLTAAHAVYEKRMAASSLNIRMGILKRLSPHYTQAWPEEIFIHEGYTHGAGFDNDIALIKLKNKVTINGSIMPVCLPRKEAASLMRTDFTGTVAGWGLTQKGLLARNLMFVDIPIADHQKCTAVYEKLYPGVRVSANMLCAGLETGGKDSCRGDSGGALVFLDNETQRWFVGGIVSWGSINCGAADQYGVYTKVINYIPWIENIISNF.

The N-terminal stretch at 1 to 19 (MRLLIFLGLLWSLVATLLG) is a signal peptide. One can recognise a CUB 1 domain in the interval 20 to 137 (SKWPEPVFGR…TGFEAFYAAE (118 aa)). Positions 67 and 75 each coordinate Ca(2+). A disulfide bridge links cysteine 72 with cysteine 90. Residue asparagine 103 is glycosylated (N-linked (GlcNAc...) asparagine). The Ca(2+) site is built by aspartate 120, serine 122, asparagine 123, aspartate 138, and glutamate 141. An EGF-like; calcium-binding domain is found at 138-181 (DVDECRVSLGDSVPCDHYCHNYLGGYYCSCRAGYVLHQNKHTCS). 5 disulfide bridges follow: cysteine 142–cysteine 156, cysteine 152–cysteine 165, cysteine 167–cysteine 180, cysteine 184–cysteine 211, and cysteine 241–cysteine 259. 2 residues coordinate Ca(2+): asparagine 158 and glycine 162. The residue at position 158 (asparagine 158) is a (3R)-3-hydroxyasparagine. Positions 184 to 296 (CSGQVFTGRS…TGWKIHYTST (113 aa)) constitute a CUB 2 domain. Residues asparagine 285 and asparagine 308 are each glycosylated (N-linked (GlcNAc...) asparagine). 2 consecutive Sushi domains span residues 298–363 (RPCP…ECSI) and 364–431 (IDCG…VCEP). 7 disulfides stabilise this stretch: cysteine 300-cysteine 348, cysteine 328-cysteine 361, cysteine 366-cysteine 411, cysteine 396-cysteine 429, cysteine 433-cysteine 552, cysteine 598-cysteine 617, and cysteine 628-cysteine 659. The Peptidase S1 domain maps to 444 to 683 (IVGGQPAKPG…YIPWIENIIS (240 aa)). Catalysis depends on charge relay system residues histidine 483 and aspartate 532. The N-linked (GlcNAc...) asparagine glycan is linked to asparagine 545. Serine 632 functions as the Charge relay system in the catalytic mechanism. The N-linked (GlcNAc...) asparagine glycan is linked to asparagine 641.

This sequence belongs to the peptidase S1 family. As to quaternary structure, homodimer; disulfide-linked. Binds MBL2. Isoform 2 binds to MASP1. Binds SERPING1. The iron and 2-oxoglutarate dependent 3-hydroxylation of aspartate and asparagine is (R) stereospecific within EGF domains. As to expression, plasma.

Its subcellular location is the secreted. The enzyme catalyses Selective cleavage after Arg-223 in complement component C2 (-Ser-Leu-Gly-Arg-|-Lys-Ile-Gln-Ile) and after Arg-76 in complement component C4 (-Gly-Leu-Gln-Arg-|-Ala-Leu-Glu-Ile).. Functionally, serum protease that plays an important role in the activation of the complement system via mannose-binding lectin. After activation by auto-catalytic cleavage it cleaves C2 and C4, leading to their activation and to the formation of C3 convertase. The polypeptide is Mannan-binding lectin serine protease 2 (Masp2) (Mus musculus (Mouse)).